A 329-amino-acid chain; its full sequence is MVVRAFVLLALFAEASAKSCTPNKADVILVFCYPKTIITKIPECPYGWEVHQLALGGLCYNGVHEGGYYQFVIPDLSPKNKSYCGTQSEYKPPIYHFYSHIVSNDSTVIVKNQPVNYSFSCTYHSTYLVNQAAFDQRVATVHVKNGSMGTFESQLSLNFYTNAKFSTKKEAPFVLETSEIGSDLFAGVEAKGLSVRFKVVLNSCWATPSADFMYPLQWQLINKGCPTDETVLVHENGKDHRATFQFNAFRFQNIPKLSKVWLHCETFICDSEKLSCPVNCDKRKRMLRDQTGGVLVVELSLRSRAFSGLCDFSDVLLHLILMLGTWAVL.

A signal peptide spans 1-17; the sequence is MVVRAFVLLALFAEASA. Positions 19-283 constitute a ZP domain; it reads SCTPNKADVI…LSCPVNCDKR (265 aa). N80, N104, N116, and N145 each carry an N-linked (GlcNAc...) asparagine glycan. A disulfide bridge connects residues C204 and C264. A305 carries GPI-anchor amidated alanine lipidation. The propeptide at 306–329 is removed in mature form; it reads FSGLCDFSDVLLHLILMLGTWAVL.

In terms of assembly, may form homomeric filament after self-association or heteromeric filament after association with alpha-tectorin. Interacts with CEACAM16. Post-translationally, the presence of a hydrophobic C-terminus preceded by a potential cleavage site strongly suggests that tectorins are synthesized as glycosylphosphatidylinositol-linked, membrane-bound precursors. Tectorins are targeted to the apical surface of the inner ear epithelia by the lipid and proteolytically released into the extracellular compartment.

It is found in the cell membrane. The protein localises to the secreted. It localises to the extracellular space. The protein resides in the extracellular matrix. Functionally, one of the major non-collagenous components of the tectorial membrane. The tectorial membrane is an extracellular matrix of the inner ear that covers the neuroepithelium of the cochlea and contacts the stereocilia bundles of specialized sensory hair cells. Sound induces movement of these hair cells relative to the tectorial membrane, deflects the stereocilia and leads to fluctuations in hair-cell membrane potential, transducing sound into electrical signals. The polypeptide is Beta-tectorin (Tectb) (Mus musculus (Mouse)).